A 217-amino-acid chain; its full sequence is Adenylate kinase (217 aa).

Position 10–15 (10–15 (GAGKGT)) interacts with ATP. The segment at 30-59 (STGDMFREAIKRGTPLGRQAEVYIKGGRLV) is NMP. Residues Thr31, Arg36, 57–59 (RLV), 85–88 (GFPR), and Gln92 contribute to the AMP site. The LID stretch occupies residues 126–163 (GRRVCRQCGATYHVRYNPPAVPGKCDACGQDLVQRADD). Residue Arg127 participates in ATP binding. Positions 130 and 133 each coordinate Zn(2+). Residue 136-137 (TY) coordinates ATP. Cys150 and Cys153 together coordinate Zn(2+). AMP is bound by residues Arg160 and Arg171. Residue Gln199 participates in ATP binding.

The protein belongs to the adenylate kinase family. As to quaternary structure, monomer.

It is found in the cytoplasm. It carries out the reaction AMP + ATP = 2 ADP. It functions in the pathway purine metabolism; AMP biosynthesis via salvage pathway; AMP from ADP: step 1/1. Catalyzes the reversible transfer of the terminal phosphate group between ATP and AMP. Plays an important role in cellular energy homeostasis and in adenine nucleotide metabolism. The sequence is that of Adenylate kinase from Moorella thermoacetica (strain ATCC 39073 / JCM 9320).